A 244-amino-acid chain; its full sequence is tRNA uridine(34) hydroxylase (244 aa).

The region spanning 129-219 is the Rhodanese domain; the sequence is QGRELVMLDT…GILKYFEETD (91 aa). The Cysteine persulfide intermediate role is filled by Cys183.

This sequence belongs to the TrhO family.

The enzyme catalyses uridine(34) in tRNA + AH2 + O2 = 5-hydroxyuridine(34) in tRNA + A + H2O. Functionally, catalyzes oxygen-dependent 5-hydroxyuridine (ho5U) modification at position 34 in tRNAs. This is tRNA uridine(34) hydroxylase from Bordetella bronchiseptica (strain ATCC BAA-588 / NCTC 13252 / RB50) (Alcaligenes bronchisepticus).